A 65-amino-acid chain; its full sequence is Large ribosomal subunit protein bL35 (65 aa).

The disordered stretch occupies residues 1–22 (MPKMKTKSSAKKRFKVTGSGKI).

Belongs to the bacterial ribosomal protein bL35 family.

In Flavobacterium psychrophilum (strain ATCC 49511 / DSM 21280 / CIP 103535 / JIP02/86), this protein is Large ribosomal subunit protein bL35.